The primary structure comprises 348 residues: tRNA N6-adenosine threonylcarbamoyltransferase (348 aa).

Fe cation contacts are provided by H118 and H122. Residues 140–144 (LVSGG), D173, G186, D190, and N279 each bind substrate. D309 is a Fe cation binding site.

Belongs to the KAE1 / TsaD family. It depends on Fe(2+) as a cofactor.

The protein resides in the cytoplasm. The enzyme catalyses L-threonylcarbamoyladenylate + adenosine(37) in tRNA = N(6)-L-threonylcarbamoyladenosine(37) in tRNA + AMP + H(+). Functionally, required for the formation of a threonylcarbamoyl group on adenosine at position 37 (t(6)A37) in tRNAs that read codons beginning with adenine. Is involved in the transfer of the threonylcarbamoyl moiety of threonylcarbamoyl-AMP (TC-AMP) to the N6 group of A37, together with TsaE and TsaB. TsaD likely plays a direct catalytic role in this reaction. This chain is tRNA N6-adenosine threonylcarbamoyltransferase, found in Lactiplantibacillus plantarum (strain ATCC BAA-793 / NCIMB 8826 / WCFS1) (Lactobacillus plantarum).